Reading from the N-terminus, the 363-residue chain is NAD(P)H-quinone oxidoreductase subunit 1, chloroplastic (363 aa).

8 helical membrane passes run 30 to 50, 98 to 118, 127 to 147, 165 to 185, 203 to 223, 248 to 268, 300 to 320, and 336 to 356; these read LVPI…IVWL, FSIG…VIPF, LSIG…GLLM, AAQS…ISLL, FWGW…ISSL, YSGI…LVSS, VFGT…FLFI, and LLNL…LLTT.

Belongs to the complex I subunit 1 family. NDH is composed of at least 16 different subunits, 5 of which are encoded in the nucleus.

It localises to the plastid. The protein localises to the chloroplast thylakoid membrane. It catalyses the reaction a plastoquinone + NADH + (n+1) H(+)(in) = a plastoquinol + NAD(+) + n H(+)(out). The enzyme catalyses a plastoquinone + NADPH + (n+1) H(+)(in) = a plastoquinol + NADP(+) + n H(+)(out). NDH shuttles electrons from NAD(P)H:plastoquinone, via FMN and iron-sulfur (Fe-S) centers, to quinones in the photosynthetic chain and possibly in a chloroplast respiratory chain. The immediate electron acceptor for the enzyme in this species is believed to be plastoquinone. Couples the redox reaction to proton translocation, and thus conserves the redox energy in a proton gradient. The protein is NAD(P)H-quinone oxidoreductase subunit 1, chloroplastic of Solanum lycopersicum (Tomato).